The primary structure comprises 567 residues: Septation ring formation regulator EzrA (567 aa).

Residues 1 to 2 lie on the Extracellular side of the membrane; it reads ME. The helical transmembrane segment at 3-21 threads the bilayer; the sequence is IAVIVLLLLGGVMIYNHVY. At 22–567 the chain is on the cytoplasmic side; it reads RKKMYSEIDR…IFRDERSKEE (546 aa). Coiled coils occupy residues 97 to 188 and 254 to 465; these read RYAK…LTAS and REIV…LEEK.

The protein belongs to the EzrA family.

The protein localises to the cell membrane. Negative regulator of FtsZ ring formation; modulates the frequency and position of FtsZ ring formation. Inhibits FtsZ ring formation at polar sites. Interacts either with FtsZ or with one of its binding partners to promote depolymerization. The sequence is that of Septation ring formation regulator EzrA from Geobacillus sp. (strain WCH70).